Here is a 181-residue protein sequence, read N- to C-terminus: Lectin beta-1 and beta-2 chains (181 aa).

Mn(2+) is bound by residues E119 and D121. Residues D121, F123, N125, and D129 each coordinate Ca(2+). Mn(2+) contacts are provided by D129 and H136.

It belongs to the leguminous lectin family. As to quaternary structure, tetramer of two alpha and two beta chains.

The protein is Lectin beta-1 and beta-2 chains of Lathyrus ochrus (Cyprus-vetch).